A 312-amino-acid chain; its full sequence is Malate dehydrogenase (312 aa).

NAD(+) is bound by residues 7–13 and Asp34; that span reads GAAGGIG. Substrate-binding residues include Arg81 and Arg87. NAD(+) is bound by residues Asn94 and 117–119; that span reads ITN. Asn119 and Arg153 together coordinate substrate. Residue His177 is the Proton acceptor of the active site. Residue Met227 coordinates NAD(+).

It belongs to the LDH/MDH superfamily. MDH type 1 family. Homodimer.

The enzyme catalyses (S)-malate + NAD(+) = oxaloacetate + NADH + H(+). Catalyzes the reversible oxidation of malate to oxaloacetate. This Escherichia coli O17:K52:H18 (strain UMN026 / ExPEC) protein is Malate dehydrogenase.